The following is a 262-amino-acid chain: Thiazole synthase (262 aa).

Lysine 96 acts as the Schiff-base intermediate with DXP in catalysis. 1-deoxy-D-xylulose 5-phosphate contacts are provided by residues glycine 157, 184–185 (AG), and 206–207 (NT).

It belongs to the ThiG family. Homotetramer. Forms heterodimers with either ThiH or ThiS.

It is found in the cytoplasm. The enzyme catalyses [ThiS sulfur-carrier protein]-C-terminal-Gly-aminoethanethioate + 2-iminoacetate + 1-deoxy-D-xylulose 5-phosphate = [ThiS sulfur-carrier protein]-C-terminal Gly-Gly + 2-[(2R,5Z)-2-carboxy-4-methylthiazol-5(2H)-ylidene]ethyl phosphate + 2 H2O + H(+). It participates in cofactor biosynthesis; thiamine diphosphate biosynthesis. Functionally, catalyzes the rearrangement of 1-deoxy-D-xylulose 5-phosphate (DXP) to produce the thiazole phosphate moiety of thiamine. Sulfur is provided by the thiocarboxylate moiety of the carrier protein ThiS. In vitro, sulfur can be provided by H(2)S. The polypeptide is Thiazole synthase (Legionella pneumophila (strain Paris)).